We begin with the raw amino-acid sequence, 384 residues long: Spermidine/putrescine import ATP-binding protein PotA (384 aa).

The ABC transporter domain maps to 6–238 (IAFQNVSKVF…PINHFVATFI (233 aa)). 40 to 47 (GASGSGKS) is a binding site for ATP.

It belongs to the ABC transporter superfamily. Spermidine/putrescine importer (TC 3.A.1.11.1) family. The complex is composed of two ATP-binding proteins (PotA), two transmembrane proteins (PotB and PotC) and a solute-binding protein (PotD).

The protein resides in the cell membrane. It catalyses the reaction ATP + H2O + polyamine-[polyamine-binding protein]Side 1 = ADP + phosphate + polyamineSide 2 + [polyamine-binding protein]Side 1.. Its function is as follows. Part of the ABC transporter complex PotABCD involved in spermidine/putrescine import. Responsible for energy coupling to the transport system. In Streptococcus thermophilus (strain ATCC BAA-491 / LMD-9), this protein is Spermidine/putrescine import ATP-binding protein PotA.